Here is a 284-residue protein sequence, read N- to C-terminus: Shikimate dehydrogenase (NADP(+)) (284 aa).

Shikimate is bound by residues 20–22 and serine 67; that span reads SIS. Lysine 71 functions as the Proton acceptor in the catalytic mechanism. Residue aspartate 83 participates in NADP(+) binding. Shikimate contacts are provided by asparagine 92 and aspartate 107. Residues 129-133 and isoleucine 227 each bind NADP(+); that span reads GAGGA. Tyrosine 229 is a binding site for shikimate. Residue glycine 250 participates in NADP(+) binding.

It belongs to the shikimate dehydrogenase family. Homodimer.

It catalyses the reaction shikimate + NADP(+) = 3-dehydroshikimate + NADPH + H(+). The protein operates within metabolic intermediate biosynthesis; chorismate biosynthesis; chorismate from D-erythrose 4-phosphate and phosphoenolpyruvate: step 4/7. In terms of biological role, involved in the biosynthesis of the chorismate, which leads to the biosynthesis of aromatic amino acids. Catalyzes the reversible NADPH linked reduction of 3-dehydroshikimate (DHSA) to yield shikimate (SA). The polypeptide is Shikimate dehydrogenase (NADP(+)) (Streptococcus pneumoniae (strain Taiwan19F-14)).